The chain runs to 508 residues: Cytochrome P450 monooxygenase pkfB (508 aa).

The helical transmembrane segment at 9–29 threads the bilayer; it reads FSLGLSQILVCLALLYAAIHI. N-linked (GlcNAc...) asparagine glycans are attached at residues Asn-57 and Asn-305. Cys-450 contributes to the heme binding site.

Belongs to the cytochrome P450 family. Heme is required as a cofactor.

It localises to the membrane. It functions in the pathway secondary metabolite biosynthesis. Its function is as follows. Cytochrome P450 monooxygenase; part of the gene cluster that mediates the biosynthesis of aspernidine A, a prenylated isoindolinone. The starting point of the biosynthesis of aspernidin A is the production of orsellinaldehyde by the non-reducing polyketide synthase pkfA. Hydroxylation, methylation of one of the phenol groups, and prenylation, presumably catalyzed by the prenyltransferase pkfE, would be needed to yield aspernidine D. Subsequently, the cytochrome P450 monooxygenase pkfB is responsible for hydroxylation of aspernidine D to yield aspernidine E. The dehydrogenase pkfF may be responsible for further oxidation of aspernidine E to form a dialdehyde intermediate which is further transformed in a series of steps, some of which are enzyme-mediated, to generate aspernidine A. The possibility that additional enzymes outside of the cluster are involved in aspernidine A biosynthesis cannot be excluded. This is Cytochrome P450 monooxygenase pkfB from Emericella nidulans (strain FGSC A4 / ATCC 38163 / CBS 112.46 / NRRL 194 / M139) (Aspergillus nidulans).